The chain runs to 489 residues: Phosphoenolpyruvate carboxykinase (ATP) (489 aa).

Positions 53 and 159 each coordinate substrate. Residues His185, 208–216 (GLSGTGKTT), Asp258, Arg300, 409–410 (KI), and Ser415 contribute to the ATP site. Substrate is bound at residue Arg300.

Belongs to the phosphoenolpyruvate carboxykinase (ATP) family.

Its subcellular location is the cytoplasm. The enzyme catalyses oxaloacetate + ATP = phosphoenolpyruvate + ADP + CO2. Its pathway is carbohydrate biosynthesis; gluconeogenesis. In terms of biological role, involved in the gluconeogenesis. Catalyzes the conversion of oxaloacetate (OAA) to phosphoenolpyruvate (PEP) through direct phosphoryl transfer between the nucleoside triphosphate and OAA. The polypeptide is Phosphoenolpyruvate carboxykinase (ATP) (Aeropyrum pernix (strain ATCC 700893 / DSM 11879 / JCM 9820 / NBRC 100138 / K1)).